A 519-amino-acid polypeptide reads, in one-letter code: UvrABC system protein C (519 aa).

The 79-residue stretch at 9-87 (HLPGCYLFKN…IKKHWPRYNI (79 aa)) folds into the GIY-YIG domain. Positions 191–226 (RELIESMEKDMRELASRQQFEQAMALRDEIAALEYL) constitute a UVR domain.

Belongs to the UvrC family. Interacts with UvrB in an incision complex.

The protein resides in the cytoplasm. Functionally, the UvrABC repair system catalyzes the recognition and processing of DNA lesions. UvrC both incises the 5' and 3' sides of the lesion. The N-terminal half is responsible for the 3' incision and the C-terminal half is responsible for the 5' incision. This Methanosarcina barkeri (strain Fusaro / DSM 804) protein is UvrABC system protein C.